A 547-amino-acid chain; its full sequence is uncharacterized protein (547 aa).

12 helical membrane passes run 33-53, 107-127, 145-165, 203-223, 231-251, 263-283, 298-318, 351-371, 397-417, 432-452, 470-490, and 499-519; these read PTFF…IMVI, PLIV…GVIF, TGLI…LSFA, VYIL…FYLA, FIAI…FLLV, VAGI…LIYL, LNKI…ASFF, TLLT…FGLL, TVII…VAFG, LDLA…VATG, IVSL…FQAI, and VFIW…IAFG.

The protein resides in the cell membrane. This is an uncharacterized protein from Mycoplasma genitalium (strain ATCC 33530 / DSM 19775 / NCTC 10195 / G37) (Mycoplasmoides genitalium).